Reading from the N-terminus, the 177-residue chain is tRNA (cytidine(56)-2'-O)-methyltransferase (177 aa).

Residues Leu-84 and 109-113 (GAEKV) contribute to the S-adenosyl-L-methionine site.

The protein belongs to the aTrm56 family. As to quaternary structure, homodimer.

It is found in the cytoplasm. It catalyses the reaction cytidine(56) in tRNA + S-adenosyl-L-methionine = 2'-O-methylcytidine(56) in tRNA + S-adenosyl-L-homocysteine + H(+). Specifically catalyzes the AdoMet-dependent 2'-O-ribose methylation of cytidine at position 56 in tRNAs. In Methanosarcina acetivorans (strain ATCC 35395 / DSM 2834 / JCM 12185 / C2A), this protein is tRNA (cytidine(56)-2'-O)-methyltransferase.